Consider the following 206-residue polypeptide: Dephospho-CoA kinase (206 aa).

The region spanning 4 to 200 (TVALTGGIGS…ASYLKLASQF (197 aa)) is the DPCK domain. 12–17 (GSGKST) is a binding site for ATP.

It belongs to the CoaE family.

The protein resides in the cytoplasm. The catalysed reaction is 3'-dephospho-CoA + ATP = ADP + CoA + H(+). Its pathway is cofactor biosynthesis; coenzyme A biosynthesis; CoA from (R)-pantothenate: step 5/5. Functionally, catalyzes the phosphorylation of the 3'-hydroxyl group of dephosphocoenzyme A to form coenzyme A. The protein is Dephospho-CoA kinase of Salmonella paratyphi A (strain ATCC 9150 / SARB42).